Here is a 111-residue protein sequence, read N- to C-terminus: DNA-directed RNA polymerase subunit Rpo11 (111 aa).

It belongs to the archaeal Rpo11/eukaryotic RPB11/RPC19 RNA polymerase subunit family. As to quaternary structure, part of the RNA polymerase complex.

Its subcellular location is the cytoplasm. The enzyme catalyses RNA(n) + a ribonucleoside 5'-triphosphate = RNA(n+1) + diphosphate. In terms of biological role, DNA-dependent RNA polymerase (RNAP) catalyzes the transcription of DNA into RNA using the four ribonucleoside triphosphates as substrates. This Thermoplasma volcanium (strain ATCC 51530 / DSM 4299 / JCM 9571 / NBRC 15438 / GSS1) protein is DNA-directed RNA polymerase subunit Rpo11.